Consider the following 418-residue polypeptide: Serine hydroxymethyltransferase (418 aa).

(6S)-5,6,7,8-tetrahydrofolate contacts are provided by residues leucine 121 and 125 to 127 (GHL). Lysine 230 bears the N6-(pyridoxal phosphate)lysine mark. 355-357 (SPF) is a (6S)-5,6,7,8-tetrahydrofolate binding site.

This sequence belongs to the SHMT family. In terms of assembly, homodimer. It depends on pyridoxal 5'-phosphate as a cofactor.

The protein localises to the cytoplasm. The enzyme catalyses (6R)-5,10-methylene-5,6,7,8-tetrahydrofolate + glycine + H2O = (6S)-5,6,7,8-tetrahydrofolate + L-serine. It participates in one-carbon metabolism; tetrahydrofolate interconversion. Its pathway is amino-acid biosynthesis; glycine biosynthesis; glycine from L-serine: step 1/1. Catalyzes the reversible interconversion of serine and glycine with tetrahydrofolate (THF) serving as the one-carbon carrier. This reaction serves as the major source of one-carbon groups required for the biosynthesis of purines, thymidylate, methionine, and other important biomolecules. Also exhibits THF-independent aldolase activity toward beta-hydroxyamino acids, producing glycine and aldehydes, via a retro-aldol mechanism. This Streptococcus pyogenes serotype M18 (strain MGAS8232) protein is Serine hydroxymethyltransferase.